Consider the following 2203-residue polypeptide: Voltage-dependent L-type calcium channel subunit alpha-1D (2203 aa).

2 disordered regions span residues 1–51 and 64–100; these read MMMM…QTVL and KAAQ…SSNS. Over 1–126 the chain is Cytoplasmic; the sequence is MMMMMMMKKM…RACISIVDWK (126 aa). The span at 38–51 shows a compositional bias: polar residues; sequence GPTSQPNSSKQTVL. Basic residues predominate over residues 82-93; the sequence is QRKRQQYAKSKK. An I repeat occupies 112–408; the sequence is NNPIRRACIS…NLVLGVLSGE (297 aa). Residues 127–145 form a helical membrane-spanning segment; it reads PFDIFILLAIFANCVALAI. Topologically, residues 146 to 163 are extracellular; sequence YIPFPEDDSNSTNHNLEK. The N-linked (GlcNAc...) asparagine glycan is linked to Asn155. A helical membrane pass occupies residues 164–183; that stretch reads VEYAFLIIFTVETFLKIIAS. Residues 184–195 are Cytoplasmic-facing; sequence GLLLHPNASVRN. Residues 196-214 traverse the membrane as a helical segment; the sequence is GWNLLDFVIVIVGLFSVIL. Residues 215 to 235 lie on the Extracellular side of the membrane; it reads EQLTKETEGGNHSSGKSGGFD. An N-linked (GlcNAc...) asparagine glycan is attached at Asn225. A helical transmembrane segment spans residues 236–254; sequence VKALRAFRVLRPLRLVSGV. Residues 255–273 lie on the Cytoplasmic side of the membrane; sequence PSLQVVLNSIIKAMVPLLH. A helical transmembrane segment spans residues 274–293; it reads IALLVLFVIIIYAIIGLELF. Residues 294–381 are Extracellular-facing; sequence IGKMHKTCFF…WVNDAIGWEW (88 aa). Asn329 carries N-linked (GlcNAc...) asparagine glycosylation. Residue Glu364 coordinates Ca(2+). Residues 382 to 406 traverse the membrane as a helical segment; it reads PWVYFVSLIILGSFFVLNLVLGVLS. Topologically, residues 407–582 are cytoplasmic; sequence GEFSKEREKA…RRCRAAVKSV (176 aa). The segment at 429-446 is binding to the beta subunit; sequence QQLEEDLKGYLDWITQAE. Residues 449 to 480 are disordered; that stretch reads DPENEEEGGEEGKRNTSMPTSETESVNTENVS. Residues 463–479 are compositionally biased toward polar residues; the sequence is NTSMPTSETESVNTENV. An II repeat occupies 528 to 774; that stretch reads EALCVCRCSL…DWNAVMYDGI (247 aa). Residues 583 to 602 traverse the membrane as a helical segment; it reads TFYWLVIVLVFLNTLTISSE. At 603–617 the chain is on the extracellular side; that stretch reads HYNQPDWLTQIQDIA. A helical transmembrane segment spans residues 618 to 636; it reads NKVLLALFTCEMLVKMYSL. Topologically, residues 637-644 are cytoplasmic; the sequence is GLQAYFVS. A helical membrane pass occupies residues 645 to 663; that stretch reads LFNRFDCFVVCGGITETIL. The Extracellular segment spans residues 664 to 673; that stretch reads VELELMSPLG. The helical transmembrane segment at 674–692 threads the bilayer; that stretch reads VSVFRCVRLLRIFKVTRHW. Residues 693-711 are Cytoplasmic-facing; sequence TSLSNLVASLLNSMKSIAS. A helical membrane pass occupies residues 712 to 732; that stretch reads LLLLLFLFIIIFSLLGMQLFG. Residues 733-786 are Extracellular-facing; that stretch reads GKFNFDETQTKRSTFDNFPQALLTVFQILTGEDWNAVMYDGIMAYGGPSSSGMI. Glu764 contributes to the Ca(2+) binding site. The chain crosses the membrane as a helical span at residues 787-811; the sequence is VCIYFIILFICGNYILLKLFLAIAV. At 812 to 945 the chain is on the cytoplasmic side; that stretch reads DNLADAESLN…VGCHKLINHH (134 aa). The tract at residues 822–909 is disordered; sequence TAQKEEAEEK…AGPRPRRISE (88 aa). The span at 824 to 849 shows a compositional bias: basic and acidic residues; the sequence is QKEEAEEKERKKIARKESLENKKNNK. Polar residues predominate over residues 850 to 861; that stretch reads PEVNQIANSDNK. Residues 884 to 897 show a composition bias toward acidic residues; that stretch reads VGEEEEEEEEDEPE. The III repeat unit spans residues 892 to 1174; that stretch reads EEDEPEVPAG…LLYKAIDSNG (283 aa). A helical transmembrane segment spans residues 946–964; the sequence is IFTNLILVFIMLSSAALAA. The Extracellular segment spans residues 965-980; the sequence is EDPIRSHSFRNTILGY. The chain crosses the membrane as a helical span at residues 981-1000; that stretch reads FDYAFTAIFTVEILLKMTTF. Over 1001-1012 the chain is Cytoplasmic; that stretch reads GAFLHKGAFCRN. The helical transmembrane segment at 1013-1031 threads the bilayer; it reads YFNLLDMLVVGVSLVSFGI. Over 1032 to 1037 the chain is Extracellular; it reads QSSAIS. The helical transmembrane segment at 1038–1057 threads the bilayer; sequence VVKILRVLRVLRPLRAINRA. Over 1058–1076 the chain is Cytoplasmic; sequence KGLKHVVQCVFVAIRTIGN. The chain crosses the membrane as a helical span at residues 1077-1096; that stretch reads IMIVTTLLQFMFACIGVQLF. At 1097–1186 the chain is on the extracellular side; the sequence is KGKFYRCTDE…VGPVYNYRVE (90 aa). Residues 1134–1224 form a dihydropyridine binding region; sequence RIWQNSDFNF…QEQGEKEYKN (91 aa). Glu1160 serves as a coordination point for Ca(2+). The helical transmembrane segment at 1187–1207 threads the bilayer; it reads ISIFFIIYIIIVAFFMMNIFV. Residues 1208–1264 are Cytoplasmic-facing; that stretch reads GFVIVTFQEQGEKEYKNCELDKNQRQCVEYALKARPLRRYIPKNPYQYKFWYVVNSS. The stretch at 1211–1486 is one IV repeat; that stretch reads IVTFQEQGEK…YTCGSNFAIV (276 aa). A helical membrane pass occupies residues 1265-1283; that stretch reads PFEYMMFVLIMLNTLCLAM. Over 1284–1298 the chain is Extracellular; sequence QHYEQSKMFNDAMDI. Residues 1299-1318 traverse the membrane as a helical segment; it reads LNMVFTGVFTVEMVLKVIAF. At 1319–1325 the chain is on the cytoplasmic side; that stretch reads KPKGYFS. Residues 1326–1347 form a helical membrane-spanning segment; it reads DAWNTFDSLIVIGSIIDVALSE. The Extracellular portion of the chain corresponds to 1348 to 1357; sequence ADNSEESNRI. The chain crosses the membrane as a helical span at residues 1358–1377; it reads SITFFRLFRVMRLVKLLSRG. Topologically, residues 1378 to 1396 are cytoplasmic; the sequence is EGIRTLLWTFIKSFQALPY. A helical transmembrane segment spans residues 1397–1416; sequence VALLIAMLFFIYAVIGMQMF. At 1417 to 1483 the chain is on the extracellular side; the sequence is GKVAMRDNNQ…GEEYTCGSNF (67 aa). A dihydropyridine binding region spans residues 1464–1530; it reads LCDPDSDYNP…LGPHHLDEFK (67 aa). The tract at residues 1476-1519 is phenylalkylamine binding; sequence EYTCGSNFAIVYFISFYMLCAFLIINLFVAVIMDNFDYLTRDWS. A helical transmembrane segment spans residues 1484–1508; the sequence is AIVYFISFYMLCAFLIINLFVAVIM. Residues 1509–2203 lie on the Cytoplasmic side of the membrane; the sequence is DNFDYLTRDW…ADEMICITTL (695 aa). Disordered stretches follow at residues 1734 to 1766, 1795 to 1816, 1920 to 1963, and 2176 to 2195; these read NHVN…PASD, TSTN…KRPS, FERP…HRRS, and GPGY…DLAD. Residues 1795–1806 show a composition bias toward polar residues; sequence TSTNANLNNANM. Residues 2180–2195 are compositionally biased toward acidic residues; sequence SDEEPDPGREEEDLAD.

The protein belongs to the calcium channel alpha-1 subunit (TC 1.A.1.11) family. CACNA1D subfamily. As to quaternary structure, voltage-dependent calcium channels are multisubunit complexes, consisting of alpha-1, alpha-2, beta and delta subunits in a 1:1:1:1 ratio. The channel activity is directed by the pore-forming and voltage-sensitive alpha-1 subunit. In many cases, this subunit is sufficient to generate voltage-sensitive calcium channel activity. The auxiliary subunits beta and alpha-2/delta linked by a disulfide bridge regulate the channel activity. Interacts with CABP1 and CABP4, resulting in a near elimination of calcium-dependent inactivation of the channel. Interacts with RIMBP2. Expressed in brain, pancreatic islets and B-lymphocytes.

The protein resides in the membrane. It carries out the reaction Ca(2+)(in) = Ca(2+)(out). Voltage-sensitive calcium channels (VSCC) mediate the entry of calcium ions into excitable cells and are also involved in a variety of calcium-dependent processes, including muscle contraction, hormone or neurotransmitter release, gene expression, cell motility, cell division and cell death. The isoform alpha-1D gives rise to L-type calcium currents. Long-lasting (L-type) calcium channels belong to the 'high-voltage activated' (HVA) group. They are blocked by dihydropyridines (DHP), phenylalkylamines, and by benzothiazepines. Functionally, voltage-sensitive calcium channels (VSCC) mediate the entry of calcium ions into excitable cells and are also involved in a variety of calcium-dependent processes, including muscle contraction, hormone or neurotransmitter release, gene expression, cell motility, cell division and cell death. The isoform alpha-1D gives rise to L-type calcium currents. The sequence is that of Voltage-dependent L-type calcium channel subunit alpha-1D (Cacna1d) from Rattus norvegicus (Rat).